A 179-amino-acid chain; its full sequence is Large ribosomal subunit protein uL5 (179 aa).

This sequence belongs to the universal ribosomal protein uL5 family. Part of the 50S ribosomal subunit; part of the 5S rRNA/L5/L18/L25 subcomplex. Contacts the 5S rRNA and the P site tRNA. Forms a bridge to the 30S subunit in the 70S ribosome.

This is one of the proteins that bind and probably mediate the attachment of the 5S RNA into the large ribosomal subunit, where it forms part of the central protuberance. In the 70S ribosome it contacts protein S13 of the 30S subunit (bridge B1b), connecting the 2 subunits; this bridge is implicated in subunit movement. Contacts the P site tRNA; the 5S rRNA and some of its associated proteins might help stabilize positioning of ribosome-bound tRNAs. This chain is Large ribosomal subunit protein uL5, found in Pseudomonas savastanoi pv. phaseolicola (strain 1448A / Race 6) (Pseudomonas syringae pv. phaseolicola (strain 1448A / Race 6)).